Here is a 521-residue protein sequence, read N- to C-terminus: GMP synthase [glutamine-hydrolyzing] (521 aa).

Residues 5-197 (KILILDFGSQ…VLDICGAQPG (193 aa)) enclose the Glutamine amidotransferase type-1 domain. C81 serves as the catalytic Nucleophile. Active-site residues include H171 and E173. A GMPS ATP-PPase domain is found at 198-390 (WTMPNYIEEA…LGLPREMVYR (193 aa)). 225-231 (SGGVDSS) provides a ligand contact to ATP.

As to quaternary structure, homodimer.

It catalyses the reaction XMP + L-glutamine + ATP + H2O = GMP + L-glutamate + AMP + diphosphate + 2 H(+). It functions in the pathway purine metabolism; GMP biosynthesis; GMP from XMP (L-Gln route): step 1/1. Its function is as follows. Catalyzes the synthesis of GMP from XMP. The polypeptide is GMP synthase [glutamine-hydrolyzing] (Neisseria gonorrhoeae (strain ATCC 700825 / FA 1090)).